Reading from the N-terminus, the 379-residue chain is Lipoyl synthase 1, mitochondrial (379 aa).

Residues Cys-106, Cys-111, Cys-117, Cys-137, Cys-141, Cys-144, and Ser-352 each contribute to the [4Fe-4S] cluster site. Residues 122–341 (EHGTQTATIM…EERGNELGFL (220 aa)) enclose the Radical SAM core domain.

It belongs to the radical SAM superfamily. Lipoyl synthase family. The cofactor is [4Fe-4S] cluster.

It is found in the mitochondrion. The enzyme catalyses [[Fe-S] cluster scaffold protein carrying a second [4Fe-4S](2+) cluster] + N(6)-octanoyl-L-lysyl-[protein] + 2 oxidized [2Fe-2S]-[ferredoxin] + 2 S-adenosyl-L-methionine + 4 H(+) = [[Fe-S] cluster scaffold protein] + N(6)-[(R)-dihydrolipoyl]-L-lysyl-[protein] + 4 Fe(3+) + 2 hydrogen sulfide + 2 5'-deoxyadenosine + 2 L-methionine + 2 reduced [2Fe-2S]-[ferredoxin]. The protein operates within protein modification; protein lipoylation via endogenous pathway; protein N(6)-(lipoyl)lysine from octanoyl-[acyl-carrier-protein]: step 2/2. In terms of biological role, catalyzes the radical-mediated insertion of two sulfur atoms into the C-6 and C-8 positions of the octanoyl moiety bound to the lipoyl domains of lipoate-dependent enzymes, thereby converting the octanoylated domains into lipoylated derivatives. The sequence is that of Lipoyl synthase 1, mitochondrial from Drosophila yakuba (Fruit fly).